Consider the following 492-residue polypeptide: MKKGSVGNVETKTYALPNELVLKSGKTLKEVNIAYETYGKLNKDKNNAILVFHALSGNAHAAGIHKTDGKLGWWDALIGPLKCIDTNKYFVICSNVLGGCNGTTGPSSINPDTNKPYGIDFPVITISDMVTLQKNLIDHLGIKKLFSIIGGSMGGMQALEWCATYPEVINSAVIIATTSSSSPQQIAFNEIGRRAIMSDPKWDGGKYYYKNQPSEGLALARMIGHVTYLSKDSMHEKFGRCLQDKNEYGFNFETDFQVESYLKYQGDSFTKRFDANSYLYLTKALDYFDLTKNGSLSDAFEKLSAKIMIVSINSDWLYTPEEAKEIVSAMSTSGINVKYHEIKSIYGHDAFLIENGQMSYIISEFLSEKIVENIMTKNFSTIYENETIKKAASLMVSKNITHIPVVSNENKLLGIITAWDVSKSIAEENSIENIKISQMMTKNVITAFIDDKIEKIAIKMQEYNISCLPVVDQNGLVIGMISAENITNTITI.

The AB hydrolase-1 domain maps to 47-352 (NAILVFHALS…KSIYGHDAFL (306 aa)). S152 (nucleophile) is an active-site residue. R221 provides a ligand contact to substrate. Residues D315 and H348 contribute to the active site. D349 is a substrate binding site. 2 consecutive CBS domains span residues 375–431 (MTKN…ENSI) and 440–492 (MTKN…TITI).

This sequence belongs to the AB hydrolase superfamily. MetX family. As to quaternary structure, homodimer.

The protein localises to the cytoplasm. It carries out the reaction L-homoserine + acetyl-CoA = O-acetyl-L-homoserine + CoA. It functions in the pathway amino-acid biosynthesis; L-methionine biosynthesis via de novo pathway; O-acetyl-L-homoserine from L-homoserine: step 1/1. In terms of biological role, transfers an acetyl group from acetyl-CoA to L-homoserine, forming acetyl-L-homoserine. The sequence is that of Homoserine O-acetyltransferase from Methanococcus vannielii (strain ATCC 35089 / DSM 1224 / JCM 13029 / OCM 148 / SB).